Reading from the N-terminus, the 246-residue chain is Large ribosomal subunit protein uL30-like 1 (246 aa).

Phosphoserine is present on Ser-54.

This sequence belongs to the universal ribosomal protein uL30 family.

The chain is Large ribosomal subunit protein uL30-like 1 (RPL7L1) from Pongo abelii (Sumatran orangutan).